Here is a 354-residue protein sequence, read N- to C-terminus: Heat-inducible transcription repressor HrcA (354 aa).

Belongs to the HrcA family.

Its function is as follows. Negative regulator of class I heat shock genes (grpE-dnaK-dnaJ and groELS operons). Prevents heat-shock induction of these operons. The chain is Heat-inducible transcription repressor HrcA from Herpetosiphon aurantiacus (strain ATCC 23779 / DSM 785 / 114-95).